A 400-amino-acid chain; its full sequence is MTSTSIPTFPFDRPVPTEPSPMLSELRNSCPVAPIELPSGHTAWLVTRFDDVKGVLSDKRFSCRAAAHPSSPPFVPFVQLCPSLLSIDGPQHTAARRLLAQGLNPGFIARMRPVVQQIVDNALDDLAAAEPPVDFQEIVSVPIGEQLMAKLLGVEPETVHELAAHVDAAMSVCEIGDEEVSRRWSALCTMVIDILHRKLAEPGDDLLSTIAQANRQQSTMTDEQVVGMLLTVVIGGVDTPIAVITNGLASLLHHRDQYERLVEDPGRVARAVEEIVRFNPATEIEHLRVVTEDVVIAGTALSAGSPAFTSITSANRDSDQFLDPDEFDVERNPNEHIAFGYGPHACPASAYSRMCLTTFFTSLTQRFPQLQLARPFEDLERRGKGLHSVGIKELLVTWPT.

The next 2 helical transmembrane spans lie at 225 to 245 (VVGM…AVIT) and 294 to 314 (VVIA…ITSA). Residue cysteine 346 coordinates heme.

Belongs to the cytochrome P450 family. It depends on heme as a cofactor.

It is found in the cell membrane. The chain is Putative cytochrome P450 141 (cyp141) from Mycobacterium tuberculosis (strain CDC 1551 / Oshkosh).